The primary structure comprises 279 residues: Methylthioribulose-1-phosphate dehydratase (279 aa).

Position 132 (Cys132) interacts with substrate. Zn(2+)-binding residues include His150 and His152. Residue Glu175 is the Proton donor/acceptor of the active site. His240 provides a ligand contact to Zn(2+).

It belongs to the aldolase class II family. MtnB subfamily. It depends on Zn(2+) as a cofactor.

It is found in the cytoplasm. It catalyses the reaction 5-(methylsulfanyl)-D-ribulose 1-phosphate = 5-methylsulfanyl-2,3-dioxopentyl phosphate + H2O. The protein operates within amino-acid biosynthesis; L-methionine biosynthesis via salvage pathway; L-methionine from S-methyl-5-thio-alpha-D-ribose 1-phosphate: step 2/6. Its function is as follows. Catalyzes the dehydration of methylthioribulose-1-phosphate (MTRu-1-P) into 2,3-diketo-5-methylthiopentyl-1-phosphate (DK-MTP-1-P). The sequence is that of Methylthioribulose-1-phosphate dehydratase from Candida tropicalis (strain ATCC MYA-3404 / T1) (Yeast).